Reading from the N-terminus, the 54-residue chain is MSPKTETKASVGFKAGVKEYKLTYYTPEYETKDTDTLAALRVTPQPGVPPEEAG.

A propeptide spanning residues 1–2 (MS) is cleaved from the precursor. The residue at position 3 (proline 3) is an N-acetylproline. Lysine 14 bears the N6,N6,N6-trimethyllysine mark.

This sequence belongs to the RuBisCO large chain family. Type I subfamily. In terms of assembly, heterohexadecamer of 8 large chains and 8 small chains.

The protein resides in the plastid. It is found in the chloroplast. The enzyme catalyses 2 (2R)-3-phosphoglycerate + 2 H(+) = D-ribulose 1,5-bisphosphate + CO2 + H2O. It carries out the reaction D-ribulose 1,5-bisphosphate + O2 = 2-phosphoglycolate + (2R)-3-phosphoglycerate + 2 H(+). Its function is as follows. RuBisCO catalyzes two reactions: the carboxylation of D-ribulose 1,5-bisphosphate, the primary event in carbon dioxide fixation, as well as the oxidative fragmentation of the pentose substrate in the photorespiration process. Both reactions occur simultaneously and in competition at the same active site. This Magnolia liliiflora (Mulan magnolia) protein is Ribulose bisphosphate carboxylase large chain (rbcL).